The primary structure comprises 246 residues: Putative pectinesterase 57 (246 aa).

N-linked (GlcNAc...) asparagine glycosylation is found at N127 and N143. Substrate is bound at residue T152. N-linked (GlcNAc...) asparagine glycosylation is present at N174. The active-site Proton donor is the D205. Residue D226 is the Nucleophile of the active site.

It belongs to the pectinesterase family.

The catalysed reaction is [(1-&gt;4)-alpha-D-galacturonosyl methyl ester](n) + n H2O = [(1-&gt;4)-alpha-D-galacturonosyl](n) + n methanol + n H(+). Its pathway is glycan metabolism; pectin degradation; 2-dehydro-3-deoxy-D-gluconate from pectin: step 1/5. In terms of biological role, acts in the modification of cell walls via demethylesterification of cell wall pectin. The sequence is that of Putative pectinesterase 57 (PME57) from Arabidopsis thaliana (Mouse-ear cress).